A 325-amino-acid polypeptide reads, in one-letter code: Sulfite dehydrogenase subunit C (325 aa).

The next 8 helical transmembrane spans lie at 5 to 25 (FSVI…LAMV), 43 to 63 (FYAV…GASF), 87 to 107 (EVIV…AHWF), 126 to 146 (LLLG…TAMI), 165 to 185 (FLFL…AYIG), 186 to 206 (NPLV…GLAS), 266 to 286 (VYLV…YLIG), and 290 to 310 (LPII…WSFF).

The protein belongs to the DmsC family. Forms a heterotrimeric membrane-bound complex composed of a catalytic heterodimer (SoeAB) and a membrane anchor protein (SoeC).

It is found in the cell inner membrane. Its function is as follows. Part of the SoeABC complex that catalyzes the oxidation of sulfite to sulfate. SoeC probably anchors and stabilizes the catalytic subunits. The protein is Sulfite dehydrogenase subunit C of Allochromatium vinosum (strain ATCC 17899 / DSM 180 / NBRC 103801 / NCIMB 10441 / D) (Chromatium vinosum).